The following is a 281-amino-acid chain: 2-dehydro-3-deoxyphosphooctonate aldolase (281 aa).

It belongs to the KdsA family.

It is found in the cytoplasm. The enzyme catalyses D-arabinose 5-phosphate + phosphoenolpyruvate + H2O = 3-deoxy-alpha-D-manno-2-octulosonate-8-phosphate + phosphate. The protein operates within carbohydrate biosynthesis; 3-deoxy-D-manno-octulosonate biosynthesis; 3-deoxy-D-manno-octulosonate from D-ribulose 5-phosphate: step 2/3. Its pathway is bacterial outer membrane biogenesis; lipopolysaccharide biosynthesis. This chain is 2-dehydro-3-deoxyphosphooctonate aldolase, found in Janthinobacterium sp. (strain Marseille) (Minibacterium massiliensis).